The sequence spans 107 residues: Biphenyl 2,3-dioxygenase, ferredoxin component (107 aa).

A Rieske domain is found at 4–99 (TKICSSGDLA…VKLEGDDVLV (96 aa)). 4 residues coordinate [2Fe-2S] cluster: C43, H45, C62, and H65.

The protein belongs to the bacterial ring-hydroxylating dioxygenase ferredoxin component family. In terms of assembly, the multicomponent biphenyl dioxygenase system is composed of a ferredoxin reductase (BphA4), a ferredoxin (BphA3), and a terminal oxygenase (BphA1A2). [2Fe-2S] cluster serves as cofactor.

It participates in xenobiotic degradation; biphenyl degradation. Ferredoxin component of the biphenyl dioxygenase system that catalyzes the stereospecific dihydroxylation of the aromatic ring of biphenyl, yielding a dihydrodiol compound. Is likely involved in biphenyl degradation that allows growth of Rhodococcus sp. strain RHA1 on biphenyl as the sole source of carbon and energy. The dioxygenase system can also use naphtalene and 4-chlorobiphenyl (4-CB) as substrates, as well as some polychlorinated biphenyls (PCB) such as 2,2'-dichlorobiphenyl, 2,3-dichlorobiphenyl and 2,5,2'-trichlorobiphenyl. It exhibits weak activity toward dibenzofuran and dibenzo-p-dioxin. Electrons are transferred from NADH to the [2Fe-2S] cluster in BphA1 via FAD of BphA4 and [2Fe-2S] cluster of BphA3. This chain is Biphenyl 2,3-dioxygenase, ferredoxin component, found in Rhodococcus jostii (strain RHA1).